The chain runs to 157 residues: Transcription elongation factor GreA (157 aa).

The stretch at 47–75 forms a coiled coil; that stretch reads SGEYEDAKKAQALLEGRIRELKHLLSRAE.

Belongs to the GreA/GreB family.

Necessary for efficient RNA polymerase transcription elongation past template-encoded arresting sites. The arresting sites in DNA have the property of trapping a certain fraction of elongating RNA polymerases that pass through, resulting in locked ternary complexes. Cleavage of the nascent transcript by cleavage factors such as GreA or GreB allows the resumption of elongation from the new 3'terminus. GreA releases sequences of 2 to 3 nucleotides. In Chloroflexus aggregans (strain MD-66 / DSM 9485), this protein is Transcription elongation factor GreA.